We begin with the raw amino-acid sequence, 238 residues long: 5'-deoxynucleotidase YBR242W (238 aa).

An HD domain is found at 77 to 183 (ISDHMYRLSI…VKDIDKYEML (107 aa)). The a divalent metal cation site is built by H80, H108, D109, E112, D117, I118, and D178.

The protein belongs to the HDDC2 family. In terms of assembly, homodimer. Mn(2+) serves as cofactor. It depends on Co(2+) as a cofactor. Requires Mg(2+) as cofactor.

It carries out the reaction a 2'-deoxyribonucleoside 5'-phosphate + H2O = a 2'-deoxyribonucleoside + phosphate. Its function is as follows. Catalyzes the dephosphorylation of the nucleoside 5'-monophosphates deoxyadenosine monophosphate (dAMP), deoxycytidine monophosphate (dCMP), deoxyguanosine monophosphate (dGMP) and deoxythymidine monophosphate (dTMP). The chain is 5'-deoxynucleotidase YBR242W from Saccharomyces cerevisiae (strain ATCC 204508 / S288c) (Baker's yeast).